A 156-amino-acid polypeptide reads, in one-letter code: Cyanate hydratase (156 aa).

Catalysis depends on residues Arg-96, Glu-99, and Ser-122.

Belongs to the cyanase family.

It carries out the reaction cyanate + hydrogencarbonate + 3 H(+) = NH4(+) + 2 CO2. Functionally, catalyzes the reaction of cyanate with bicarbonate to produce ammonia and carbon dioxide. This chain is Cyanate hydratase, found in Pseudomonas putida (strain W619).